Here is a 307-residue protein sequence, read N- to C-terminus: Phospho-N-acetylmuramoyl-pentapeptide-transferase (307 aa).

10 helical membrane passes run 3–23 (IILFTSLVAFFVFLLILKYWI), 47–67 (SGTPVMGGIIFLIVSIPFLFF), 71–91 (FFPSLSTILFGLLGLLDDFKL), 105–125 (IFLSFIITLLLYIFSFHDYKI), 137–157 (IFYVILFFVVFIAVPNAINLT), 162–182 (GLAGGTSLITLFFFLIYNFQF), 186–206 (LTLEISLMITALIAFLWFNSH), 210–230 (IFMGDVGAFALGGFIASLSII), 237–257 (LVFLGGIFLIESLSVFIQVFF), and 285–305 (VVWRFYIIHLIMMIGGIILWN).

This sequence belongs to the glycosyltransferase 4 family. MraY subfamily. Mg(2+) serves as cofactor.

It localises to the cell inner membrane. The catalysed reaction is UDP-N-acetyl-alpha-D-muramoyl-L-alanyl-gamma-D-glutamyl-meso-2,6-diaminopimeloyl-D-alanyl-D-alanine + di-trans,octa-cis-undecaprenyl phosphate = di-trans,octa-cis-undecaprenyl diphospho-N-acetyl-alpha-D-muramoyl-L-alanyl-D-glutamyl-meso-2,6-diaminopimeloyl-D-alanyl-D-alanine + UMP. Its pathway is cell wall biogenesis; peptidoglycan biosynthesis. Its function is as follows. Catalyzes the initial step of the lipid cycle reactions in the biosynthesis of the cell wall peptidoglycan: transfers peptidoglycan precursor phospho-MurNAc-pentapeptide from UDP-MurNAc-pentapeptide onto the lipid carrier undecaprenyl phosphate, yielding undecaprenyl-pyrophosphoryl-MurNAc-pentapeptide, known as lipid I. The sequence is that of Phospho-N-acetylmuramoyl-pentapeptide-transferase from Dictyoglomus turgidum (strain DSM 6724 / Z-1310).